A 311-amino-acid polypeptide reads, in one-letter code: Ribonuclease Z (311 aa).

Positions 61, 63, 65, 66, 148, 216, and 275 each coordinate Zn(2+). Residue aspartate 65 is the Proton acceptor of the active site.

The protein belongs to the RNase Z family. In terms of assembly, homodimer. Zn(2+) is required as a cofactor.

The enzyme catalyses Endonucleolytic cleavage of RNA, removing extra 3' nucleotides from tRNA precursor, generating 3' termini of tRNAs. A 3'-hydroxy group is left at the tRNA terminus and a 5'-phosphoryl group is left at the trailer molecule.. In terms of biological role, zinc phosphodiesterase, which displays some tRNA 3'-processing endonuclease activity. Probably involved in tRNA maturation, by removing a 3'-trailer from precursor tRNA. The sequence is that of Ribonuclease Z from Clostridium novyi (strain NT).